Consider the following 314-residue polypeptide: Aryldialkylphosphatase (314 aa).

Residues histidine 22, histidine 24, and lysine 137 each contribute to the Fe cation site. Co(2+)-binding residues include lysine 137, histidine 170, and histidine 199. Residue lysine 137 is modified to N6-carboxylysine. A Fe cation-binding site is contributed by aspartate 256.

This sequence belongs to the metallo-dependent hydrolases superfamily. Phosphotriesterase family. Homodimer. Co(2+) is required as a cofactor. It depends on Fe cation as a cofactor.

It catalyses the reaction An aryl dialkyl phosphate + H2O = dialkyl phosphate + an aryl alcohol.. Inactivated by EDTA and o-phenanthroline. Has a low paraoxonase activity. Also active, but with a lower activity, against other organo-phosphorus insecticides such as Dursban, Coumaphos, pNP-butanoate or parathion. This Saccharolobus solfataricus (strain ATCC 35092 / DSM 1617 / JCM 11322 / P2) (Sulfolobus solfataricus) protein is Aryldialkylphosphatase (php).